Consider the following 471-residue polypeptide: Intraflagellar transport protein 46 homolog (471 aa).

Disordered stretches follow at residues 1–202 and 226–246; these read MSSE…SNMR and SRLE…EDDD. Composition is skewed to acidic residues over residues 89-99 and 231-246; these read SEPQEVIDVND and DSSN…EDDD.

Belongs to the IFT46 family. In terms of assembly, component of the IFT complex B composed of at least che-2, che-13, dyf-1, dyf-3, dyf-6, dyf-11, dyf-13, ift-20, ift-74, ift-81, ifta-2, osm-1, osm-5 and osm-6. In terms of tissue distribution, expressed in the hypodermis and sensory neurons including inner labial, PDE, amphid and phasmid neurons.

The protein localises to the cell projection. It localises to the cilium. Its subcellular location is the cytoplasm. It is found in the cytoskeleton. The protein resides in the cilium basal body. The protein localises to the dendrite. It localises to the perikaryon. Component of the intraflagellar transport (IFT) complex B required for transport of proteins in the motile cilium. May be required for ciliary entrance and transport of specific ciliary cargo proteins such as che-3 which are related to motility. Required for normal morphology and function of ciliated amphid sensory neurons. The chain is Intraflagellar transport protein 46 homolog from Caenorhabditis elegans.